We begin with the raw amino-acid sequence, 368 residues long: Protein-glutamate methylesterase/protein-glutamine glutaminase 2 (368 aa).

In terms of domain architecture, Response regulatory spans 6 to 123; it reads KVLLVDDSAV…KEYLESAAGE (118 aa). Asp-57 is modified (4-aspartylphosphate). A CheB-type methylesterase domain is found at 169-355; the sequence is IAGANKIAAL…SLERIPQCVL (187 aa). Catalysis depends on residues Ser-181, His-207, and Asp-303.

The protein belongs to the CheB family. In terms of processing, phosphorylated by CheA. Phosphorylation of the N-terminal regulatory domain activates the methylesterase activity.

Its subcellular location is the cytoplasm. The enzyme catalyses [protein]-L-glutamate 5-O-methyl ester + H2O = L-glutamyl-[protein] + methanol + H(+). It catalyses the reaction L-glutaminyl-[protein] + H2O = L-glutamyl-[protein] + NH4(+). In terms of biological role, involved in chemotaxis. Part of a chemotaxis signal transduction system that modulates chemotaxis in response to various stimuli. Catalyzes the demethylation of specific methylglutamate residues introduced into the chemoreceptors (methyl-accepting chemotaxis proteins or MCP) by CheR. Also mediates the irreversible deamidation of specific glutamine residues to glutamic acid. The polypeptide is Protein-glutamate methylesterase/protein-glutamine glutaminase 2 (Hahella chejuensis (strain KCTC 2396)).